Here is a 422-residue protein sequence, read N- to C-terminus: Gamma-glutamyl phosphate reductase (422 aa).

It belongs to the gamma-glutamyl phosphate reductase family.

The protein resides in the cytoplasm. It catalyses the reaction L-glutamate 5-semialdehyde + phosphate + NADP(+) = L-glutamyl 5-phosphate + NADPH + H(+). Its pathway is amino-acid biosynthesis; L-proline biosynthesis; L-glutamate 5-semialdehyde from L-glutamate: step 2/2. Its function is as follows. Catalyzes the NADPH-dependent reduction of L-glutamate 5-phosphate into L-glutamate 5-semialdehyde and phosphate. The product spontaneously undergoes cyclization to form 1-pyrroline-5-carboxylate. This Chloroflexus aurantiacus (strain ATCC 29366 / DSM 635 / J-10-fl) protein is Gamma-glutamyl phosphate reductase.